A 71-amino-acid chain; its full sequence is Omega-conotoxin-like CnVIIF (71 aa).

Intrachain disulfides connect C46/C61, C53/C65, and C60/C70. Cysteine amide; in CnVIID is present on C70.

This sequence belongs to the conotoxin M superfamily. In terms of tissue distribution, expressed by the venom duct.

Its subcellular location is the secreted. In terms of biological role, omega-conotoxins act at presynaptic membranes, they bind and block voltage-gated calcium channels (Cav). This is Omega-conotoxin-like CnVIIF from Conus consors (Singed cone).